A 576-amino-acid polypeptide reads, in one-letter code: Adenine deaminase (576 aa).

Belongs to the metallo-dependent hydrolases superfamily. Adenine deaminase family. Mn(2+) serves as cofactor.

The enzyme catalyses adenine + H2O + H(+) = hypoxanthine + NH4(+). This is Adenine deaminase from Syntrophobacter fumaroxidans (strain DSM 10017 / MPOB).